A 736-amino-acid polypeptide reads, in one-letter code: Zinc finger CCCH domain-containing protein 14 (736 aa).

Met-1 is modified (N-acetylmethionine). Positions 77-103 (TTEPSSLKSPDTSIFDSNVPSNKSSFS) are enriched in polar residues. A disordered region spans residues 77-153 (TTEPSSLKSP…RHSYDDGAST (77 aa)). A Phosphoserine modification is found at Ser-85. Glycyl lysine isopeptide (Lys-Gly) (interchain with G-Cter in SUMO2) cross-links involve residues Lys-99, Lys-139, Lys-175, and Lys-198. Over residues 123–148 (RPEKRDSRVSTSSQEHKSTNVRHSYD) the composition is skewed to basic and acidic residues. Ser-240 is modified (phosphoserine). Glycyl lysine isopeptide (Lys-Gly) (interchain with G-Cter in SUMO2) cross-links involve residues Lys-245, Lys-283, and Lys-295. A disordered region spans residues 308–350 (FSHDGEEEEEDEDYGTRVGSLSSSVSVPAKPERRPSLPPSKQA). Ser-309, Ser-327, and Ser-343 each carry phosphoserine. N6-acetyllysine; alternate is present on Lys-357. Lys-357 is covalently cross-linked (Glycyl lysine isopeptide (Lys-Gly) (interchain with G-Cter in SUMO2); alternate). A compositionally biased stretch (polar residues) spans 367-380 (TKTTNYPAVPQKQT). The interval 367 to 386 (TKTTNYPAVPQKQTLPVAPR) is disordered. Residue Lys-378 forms a Glycyl lysine isopeptide (Lys-Gly) (interchain with G-Cter in SUMO2) linkage. Phosphoserine is present on residues Ser-390 and Ser-409. Residues 400-420 (QGQNRAPRISPPVKEEEAKGD) are disordered. Glycyl lysine isopeptide (Lys-Gly) (interchain with G-Cter in SUMO2) cross-links involve residues Lys-413 and Lys-489. A phosphoserine mark is found at Ser-498, Ser-515, Ser-527, and Ser-620. 5 consecutive C3H1-type zinc fingers follow at residues 595 to 620 (EKLL…HPIS), 621 to 640 (PCKA…VHPN), 641 to 656 (CKYD…PFTH), 682 to 699 (CRYF…YHPK), and 701 to 719 (CRFN…HPTI).

Belongs to the ZC3H14 family. Homodimer; facilitating circular RNAs (circRNAs) formation. Associates with the spliceosome. Interacts with HOOK2. Interacts with ZFC3H1 in a RNase-sensitive manner.

Its subcellular location is the nucleus speckle. Functionally, RNA-binding protein involved in the biogenesis of circular RNAs (circRNAs), which are produced by back-splicing circularization of pre-mRNAs. Acts by binding to both exon-intron boundary and 3'-UTR of pre-mRNAs to promote circRNA biogenesis through dimerization and the association with the spliceosome. Required for spermatogenesis via involvement in circRNA biogenesis. Regulates the pre-mRNA processing of ATP5MC1; preventing its degradation. Also binds the poly(A) tail of mRNAs; controlling poly(A) length in neuronal cells. The sequence is that of Zinc finger CCCH domain-containing protein 14 from Rattus norvegicus (Rat).